The following is a 1174-amino-acid chain: Carboxylic acid reductase (1174 aa).

AMP-binding positions include His297, Ser392, 413 to 414, Thr418, Asp491, 503 to 506, Lys512, and Lys612; these read EG and YLDR. Positions 651-726 constitute a Carrier domain; the sequence is APVLVTVCRA…ALADYVEAAR (76 aa). Ser685 carries the post-translational modification O-(pantetheine 4'-phosphoryl)serine. NADP(+)-binding positions include 787-791, Arg814, Arg824, 854-855, 880-882, 919-920, Tyr956, and Lys960; these read TGFLG, DK, PAA, and TS.

This sequence belongs to the ATP-dependent AMP-binding enzyme family. Carboxylic acid reductase subfamily. The cofactor is pantetheine 4'-phosphate.

The enzyme catalyses a carboxylate + ATP + NADPH + H(+) = an aldehyde + AMP + diphosphate + NADP(+). In terms of biological role, catalyzes the ATP- and NADPH-dependent reduction of carboxylic acids to the corresponding aldehydes. Catalyzes the reduction of a wide range of aliphatic fatty acids (C6-C18) into their corresponding aldehydes. Can also reduce benzoate to benzaldehyde. Has a preference for NADPH over NADH as the electron donor. In Mycobacterium marinum (strain ATCC BAA-535 / M), this protein is Carboxylic acid reductase.